Consider the following 151-residue polypeptide: Small ribosomal subunit protein uS15 (151 aa).

Positions 1 to 16 (MPHRSRDKKGRSRSVR) are enriched in basic residues. A disordered region spans residues 1–20 (MPHRSRDKKGRSRSVRPAHP).

The protein belongs to the universal ribosomal protein uS15 family. In terms of assembly, part of the 30S ribosomal subunit.

In Pyrobaculum aerophilum (strain ATCC 51768 / DSM 7523 / JCM 9630 / CIP 104966 / NBRC 100827 / IM2), this protein is Small ribosomal subunit protein uS15.